Here is a 259-residue protein sequence, read N- to C-terminus: MSKYKLIMLRHGEGAWNKENRFCSWVDQKLNSEGMEEARNCGKQLKALNFEFDLVFTSVLNRSIHTAWLILEELGQEWVPVESSWRLNERHYGALIGLNREQMALNHGEEQVRLWRRSYNITPPPIEESHPYYHEIYNDRRYKVCDVPLDQLPRSESLKDVLERLLPYWNERIAPEVLRGKTVLISAHGNSSRALLKHLEGISDEDIINITLPTGVPILLELDENLRAVGPHQFLGDQEAIQAAIKKVEDQGKVKQAKK.

Ser-2 is subject to N-acetylserine. Substrate is bound by residues 10–17 (RHGEGAWN), 23–24 (CS), Arg-62, 89–92 (ERHY), Arg-100, and 116–117 (RR). His-11 functions as the Tele-phosphohistidine intermediate in the catalytic mechanism. The active-site Proton donor/acceptor is Glu-89. Thr-122 carries the phosphothreonine modification. 189–190 (GN) contacts substrate.

It belongs to the phosphoglycerate mutase family. BPG-dependent PGAM subfamily. As to quaternary structure, homodimer.

It carries out the reaction (2R)-3-phospho-glyceroyl phosphate = (2R)-2,3-bisphosphoglycerate + H(+). The catalysed reaction is (2R)-2-phosphoglycerate = (2R)-3-phosphoglycerate. Its activity is regulated as follows. At alkaline pH BPGM favors the synthase reaction; however, at lower pH the phosphatase reaction is dominant. Inhibited by citrate. Its function is as follows. Plays a major role in regulating hemoglobin oxygen affinity by controlling the levels of its allosteric effector 2,3-bisphosphoglycerate (2,3-BPG). Also exhibits mutase (EC 5.4.2.11) activity. The protein is Bisphosphoglycerate mutase (BPGM) of Macaca fascicularis (Crab-eating macaque).